Here is a 347-residue protein sequence, read N- to C-terminus: Protein RecA (347 aa).

67-74 provides a ligand contact to ATP; the sequence is GPESSGKT.

This sequence belongs to the RecA family.

It localises to the cytoplasm. Its function is as follows. Can catalyze the hydrolysis of ATP in the presence of single-stranded DNA, the ATP-dependent uptake of single-stranded DNA by duplex DNA, and the ATP-dependent hybridization of homologous single-stranded DNAs. It interacts with LexA causing its activation and leading to its autocatalytic cleavage. This chain is Protein RecA, found in Helicobacter acinonychis (strain Sheeba).